Reading from the N-terminus, the 161-residue chain is Carboxysome assembly protein CcmN (161 aa).

Positions 111–140 (LLSAETPPTTATVSSSEPAGRSPQSSAIAH) are disordered. The span at 116 to 137 (TPPTTATVSSSEPAGRSPQSSA) shows a compositional bias: polar residues. Residues 144–161 (VYGKEQFLRMRQSMFPDR) carry the Encapsulation peptide motif.

It belongs to the CcmN family. Interacts with CcmM via the N-terminus of CcmN. Interacts with CcmK2 via the 18 C-terminal residues.

The protein localises to the carboxysome. In terms of biological role, required for carboxysome formation; the N-terminus interacts with CcmM which itself binds RuBisCO (ribulose bisphosphate carboxylase, rbcL-rbcS), while the C-terminal 18 residues interact with carboxysome shell protein CcmK2. Required for growth in normal air. Beta-carboxysome assembly initiates when soluble RuBisCO is condensed into a liquid matrix in a pre-carboxysome by the RbcS-like domains of probably both CcmM58 and CcmM35. CcmN interacts with the N-terminus of CcmM58, and then recruits the CcmK2 major shell protein via CcmN's encapsulation peptide. Shell formation requires CcmK proteins and CcmO. CcmL caps the otherwise elongated carboxysome. Once fully encapsulated carboxysomes are formed, they migrate within the cell probably via interactions with the cytoskeleton. In Synechococcus elongatus (strain ATCC 33912 / PCC 7942 / FACHB-805) (Anacystis nidulans R2), this protein is Carboxysome assembly protein CcmN.